The sequence spans 747 residues: uncharacterized protein (747 aa).

A helical membrane pass occupies residues 7-27 (FFLKVISVIAPIVIIPTILAN).

The protein localises to the membrane. This is an uncharacterized protein from Ureaplasma parvum serovar 3 (strain ATCC 700970).